The chain runs to 463 residues: mRNA-capping enzyme subunit alpha (463 aa).

Residue K66 is the N6-GMP-lysine intermediate of the active site. Residues 404 to 463 (WEERKSKKRTHSSISGPMLPPVAETKAPREATQSRYIDDEDWSDEADDDDEDSLKRARIE) form a disordered region. Positions 441–455 (DDEDWSDEADDDDED) are enriched in acidic residues.

Belongs to the eukaryotic GTase family. Heterodimer. The mRNA-capping enzyme is composed of two separate chains alpha and beta, respectively a mRNA guanylyltransferase and an mRNA 5'-triphosphate monophosphatase.

Its subcellular location is the nucleus. It catalyses the reaction a 5'-end diphospho-ribonucleoside in mRNA + GTP + H(+) = a 5'-end (5'-triphosphoguanosine)-ribonucleoside in mRNA + diphosphate. Second step of mRNA capping. Transfer of the GMP moiety of GTP to the 5'-end of RNA via an enzyme-GMP covalent reaction intermediate. The protein is mRNA-capping enzyme subunit alpha (CEG1) of Eremothecium gossypii (strain ATCC 10895 / CBS 109.51 / FGSC 9923 / NRRL Y-1056) (Yeast).